Reading from the N-terminus, the 287-residue chain is DegV domain-containing protein DR_0500 (287 aa).

The DegV domain maps to 7–280 (FAVVTDGGLD…PRALGVAAAP (274 aa)). S62 and S93 together coordinate hexadecanoate.

Its function is as follows. May bind long-chain fatty acids, such as palmitate, and may play a role in lipid transport or fatty acid metabolism. The protein is DegV domain-containing protein DR_0500 of Deinococcus radiodurans (strain ATCC 13939 / DSM 20539 / JCM 16871 / CCUG 27074 / LMG 4051 / NBRC 15346 / NCIMB 9279 / VKM B-1422 / R1).